The chain runs to 86 residues: Acyl carrier protein (86 aa).

Positions 10–85 constitute a Carrier domain; the sequence is DKIEQKVIEM…DVIKYIKERQ (76 aa). Ser-45 is modified (O-(pantetheine 4'-phosphoryl)serine).

Belongs to the acyl carrier protein (ACP) family. 4'-phosphopantetheine is transferred from CoA to a specific serine of apo-ACP by AcpS. This modification is essential for activity because fatty acids are bound in thioester linkage to the sulfhydryl of the prosthetic group.

It localises to the cytoplasm. Its pathway is lipid metabolism; fatty acid biosynthesis. Functionally, carrier of the growing fatty acid chain in fatty acid biosynthesis. This Rickettsia africae (strain ESF-5) protein is Acyl carrier protein.